Reading from the N-terminus, the 961-residue chain is IQ motif and SEC7 domain-containing protein 1 (961 aa).

Positions 21–113 (SGVEGEAPSS…SLSESYELSS (93 aa)) are disordered. Positions 29–38 (SSETGTSLDS) are enriched in polar residues. Ser-88, Ser-104, and Ser-106 each carry phosphoserine. The IQ domain maps to 133–162 (TRHAARTIQTAFRQYQMNKNFERLRSSMSE). 3 positions are modified to phosphoserine: Ser-179, Ser-247, and Ser-251. Disordered stretches follow at residues 263–291 (SEEV…HRKL), 310–332 (LSPP…DLRL), and 347–515 (KEDK…DSPA). Positions 272-291 (ARARDTEPKPGLHGMDHRKL) are enriched in basic and acidic residues. 2 stretches are compositionally biased toward basic and acidic residues: residues 364-374 (ERPEPRLRVEH) and 428-444 (LPRE…RPLE). A compositionally biased stretch (low complexity) spans 469-487 (DSINSTSNSNDTINCSSES). Ser-510 and Ser-513 each carry phosphoserine. Residues 515-708 (AFSNDVIRKR…IGIYERIRKR (194 aa)) form the SEC7 domain. Residues 772-864 (HQREIFLFND…LRESVAEVQE (93 aa)) enclose the PH domain. Positions 846-877 (QDRKKFTDDLRESVAEVQEMEKHRIESELEKQ) form a coiled coil. Phosphoserine is present on Ser-890. Position 909 is a phosphotyrosine (Tyr-909). Positions 920–961 (LSSSLRDLSEAGKRGRRSSAGSLESNVEFQPFQPPQPPVLCS) are disordered. Phosphoserine is present on residues Ser-922 and Ser-923. The segment covering 938–947 (SAGSLESNVE) has biased composition (polar residues). Residues 951–961 (FQPPQPPVLCS) show a composition bias toward pro residues.

The protein belongs to the BRAG family. As to quaternary structure, interacts with ARF1 and ARF6. Interacts with GRIA2; the interaction is required for ARF6 activation. Expressed in hippocampus.

It is found in the cytoplasm. It localises to the nucleus. Its subcellular location is the postsynaptic density. The protein resides in the cytoplasmic vesicle. The protein localises to the secretory vesicle. It is found in the synaptic vesicle. In terms of biological role, guanine nucleotide exchange factor for ARF1 and ARF6. Guanine nucleotide exchange factor activity is enhanced by lipid binding. Accelerates GTP binding by ARFs of all three classes. Guanine nucleotide exchange protein for ARF6, mediating internalization of beta-1 integrin. Involved in neuronal development. In neurons, plays a role in the control of vesicle formation by endocytoc cargo. Upon long term depression, interacts with GRIA2 and mediates the activation of ARF6 to internalize synaptic AMPAR receptors. This is IQ motif and SEC7 domain-containing protein 1 (Iqsec1) from Mus musculus (Mouse).